Reading from the N-terminus, the 348-residue chain is [LysW]-L-2-aminoadipate 6-phosphate reductase (348 aa).

Ser14–Ala17 provides a ligand contact to NADP(+). Cys151 is a catalytic residue. Asn315 provides a ligand contact to NADP(+).

It belongs to the NAGSA dehydrogenase family. Type 1 subfamily. LysY sub-subfamily.

It is found in the cytoplasm. The enzyme catalyses [amino-group carrier protein]-C-terminal-N-(1-carboxy-5-oxopentan-1-yl)-L-glutamine + phosphate + NADP(+) = [amino-group carrier protein]-C-terminal-N-(1-carboxy-5-phosphooxy-5-oxopentan-1-yl)-L-glutamine + NADPH + H(+). Its pathway is amino-acid biosynthesis; L-lysine biosynthesis via AAA pathway; L-lysine from L-alpha-aminoadipate (Thermus route): step 3/5. In terms of biological role, catalyzes the NADPH-dependent reduction of [LysW]-aminoadipate 6-phosphate to yield [LysW]-aminoadipate 6-semialdehyde. This Deinococcus radiodurans (strain ATCC 13939 / DSM 20539 / JCM 16871 / CCUG 27074 / LMG 4051 / NBRC 15346 / NCIMB 9279 / VKM B-1422 / R1) protein is [LysW]-L-2-aminoadipate 6-phosphate reductase.